A 327-amino-acid chain; its full sequence is Methionyl-tRNA formyltransferase (327 aa).

Residue 121 to 124 coordinates (6S)-5,6,7,8-tetrahydrofolate; sequence SLLP.

This sequence belongs to the Fmt family.

It carries out the reaction L-methionyl-tRNA(fMet) + (6R)-10-formyltetrahydrofolate = N-formyl-L-methionyl-tRNA(fMet) + (6S)-5,6,7,8-tetrahydrofolate + H(+). Its function is as follows. Attaches a formyl group to the free amino group of methionyl-tRNA(fMet). The formyl group appears to play a dual role in the initiator identity of N-formylmethionyl-tRNA by promoting its recognition by IF2 and preventing the misappropriation of this tRNA by the elongation apparatus. This Paraburkholderia phymatum (strain DSM 17167 / CIP 108236 / LMG 21445 / STM815) (Burkholderia phymatum) protein is Methionyl-tRNA formyltransferase.